Here is a 294-residue protein sequence, read N- to C-terminus: 33 kDa chaperonin (294 aa).

Disulfide bonds link Cys239–Cys241 and Cys272–Cys275.

The protein belongs to the HSP33 family. Under oxidizing conditions two disulfide bonds are formed involving the reactive cysteines. Under reducing conditions zinc is bound to the reactive cysteines and the protein is inactive.

The protein localises to the cytoplasm. Redox regulated molecular chaperone. Protects both thermally unfolding and oxidatively damaged proteins from irreversible aggregation. Plays an important role in the bacterial defense system toward oxidative stress. The chain is 33 kDa chaperonin from Lacticaseibacillus paracasei (strain ATCC 334 / BCRC 17002 / CCUG 31169 / CIP 107868 / KCTC 3260 / NRRL B-441) (Lactobacillus paracasei).